The sequence spans 353 residues: Photosystem II D2 protein (353 aa).

Position 2 is an N-acetylthreonine (Thr-2). Position 2 is a phosphothreonine (Thr-2). A helical membrane pass occupies residues Cys-41–Thr-61. Chlorophyll a is bound at residue His-118. The chain crosses the membrane as a helical span at residues Gly-125 to Pro-141. 2 residues coordinate pheophytin a: Gln-130 and Asn-143. A helical membrane pass occupies residues Val-153–Ser-166. His-198 contacts chlorophyll a. Residues Ala-208–Asp-228 traverse the membrane as a helical segment. Positions 215 and 262 each coordinate a plastoquinone. His-215 is a binding site for Fe cation. Residue His-269 coordinates Fe cation. Residues Gly-279 to Arg-295 traverse the membrane as a helical segment.

This sequence belongs to the reaction center PufL/M/PsbA/D family. As to quaternary structure, PSII is composed of 1 copy each of membrane proteins PsbA, PsbB, PsbC, PsbD, PsbE, PsbF, PsbH, PsbI, PsbJ, PsbK, PsbL, PsbM, PsbT, PsbX, PsbY, PsbZ, Psb30/Ycf12, at least 3 peripheral proteins of the oxygen-evolving complex and a large number of cofactors. It forms dimeric complexes. The D1/D2 heterodimer binds P680, chlorophylls that are the primary electron donor of PSII, and subsequent electron acceptors. It shares a non-heme iron and each subunit binds pheophytin, quinone, additional chlorophylls, carotenoids and lipids. There is also a Cl(-1) ion associated with D1 and D2, which is required for oxygen evolution. The PSII complex binds additional chlorophylls, carotenoids and specific lipids. is required as a cofactor.

It localises to the plastid. Its subcellular location is the chloroplast thylakoid membrane. It catalyses the reaction 2 a plastoquinone + 4 hnu + 2 H2O = 2 a plastoquinol + O2. Photosystem II (PSII) is a light-driven water:plastoquinone oxidoreductase that uses light energy to abstract electrons from H(2)O, generating O(2) and a proton gradient subsequently used for ATP formation. It consists of a core antenna complex that captures photons, and an electron transfer chain that converts photonic excitation into a charge separation. The D1/D2 (PsbA/PsbD) reaction center heterodimer binds P680, the primary electron donor of PSII as well as several subsequent electron acceptors. D2 is needed for assembly of a stable PSII complex. The polypeptide is Photosystem II D2 protein (Saccharum hybrid (Sugarcane)).